Consider the following 140-residue polypeptide: Large ribosomal subunit protein uL16 (140 aa).

Belongs to the universal ribosomal protein uL16 family. As to quaternary structure, part of the 50S ribosomal subunit.

Binds 23S rRNA and is also seen to make contacts with the A and possibly P site tRNAs. This chain is Large ribosomal subunit protein uL16, found in Amoebophilus asiaticus (strain 5a2).